We begin with the raw amino-acid sequence, 491 residues long: ADP-specific phosphofructokinase (491 aa).

One can recognise an ADPK domain in the interval 4-486 (EEWEQRHAEA…FVAMLAKIKQ (483 aa)). Residues glutamate 281, glutamate 312, and aspartate 470 each contribute to the Mg(2+) site. Residue aspartate 470 is the Proton acceptor of the active site.

Belongs to the carbohydrate kinase PfkC family. Requires Mg(2+) as cofactor.

It is found in the cytoplasm. The catalysed reaction is beta-D-fructose 6-phosphate + ADP = beta-D-fructose 1,6-bisphosphate + AMP + H(+). It participates in carbohydrate degradation; glycolysis. In terms of biological role, catalyzes the phosphorylation of fructose 6-phosphate to fructose 1,6-bisphosphate using ADP as the phosphate donor. This chain is ADP-specific phosphofructokinase, found in Methanosarcina acetivorans (strain ATCC 35395 / DSM 2834 / JCM 12185 / C2A).